Reading from the N-terminus, the 57-residue chain is UPF0434 protein Spea_1772 (57 aa).

It belongs to the UPF0434 family.

This Shewanella pealeana (strain ATCC 700345 / ANG-SQ1) protein is UPF0434 protein Spea_1772.